The primary structure comprises 78 residues: Large ribosomal subunit protein bL28 (78 aa).

A disordered region spans residues 1–21; it reads MARVCQVTGKGPMTGNNVSHA.

This sequence belongs to the bacterial ribosomal protein bL28 family.

The protein is Large ribosomal subunit protein bL28 of Bordetella petrii (strain ATCC BAA-461 / DSM 12804 / CCUG 43448).